Consider the following 162-residue polypeptide: Phosphopantetheine adenylyltransferase (162 aa).

Thr-10 is a substrate binding site. Residues 10–11 (TF) and His-18 contribute to the ATP site. Substrate contacts are provided by Lys-42, Met-74, and Arg-88. ATP-binding positions include 89 to 91 (GLR), Glu-99, and 124 to 130 (YAFLSST).

Belongs to the bacterial CoaD family. As to quaternary structure, homohexamer. The cofactor is Mg(2+).

The protein resides in the cytoplasm. It carries out the reaction (R)-4'-phosphopantetheine + ATP + H(+) = 3'-dephospho-CoA + diphosphate. It participates in cofactor biosynthesis; coenzyme A biosynthesis; CoA from (R)-pantothenate: step 4/5. In terms of biological role, reversibly transfers an adenylyl group from ATP to 4'-phosphopantetheine, yielding dephospho-CoA (dPCoA) and pyrophosphate. The protein is Phosphopantetheine adenylyltransferase of Aliivibrio fischeri (strain ATCC 700601 / ES114) (Vibrio fischeri).